The chain runs to 278 residues: Ribonuclease HII (278 aa).

The region spanning Trp-71–Pro-259 is the RNase H type-2 domain. 3 residues coordinate a divalent metal cation: Asp-77, Glu-78, and Asp-168.

Belongs to the RNase HII family. Mn(2+) serves as cofactor. Requires Mg(2+) as cofactor.

The protein localises to the cytoplasm. The enzyme catalyses Endonucleolytic cleavage to 5'-phosphomonoester.. Functionally, endonuclease that specifically degrades the RNA of RNA-DNA hybrids. This Rhodopseudomonas palustris (strain BisA53) protein is Ribonuclease HII.